A 316-amino-acid polypeptide reads, in one-letter code: MNIAHRPVLLAEAVTALVGGPLIQNQNSENHILVIDGTFGRGGHTQALLKELNPSAHMISFDKDLDAIAVAQKINDPRLKIVHDSFAQMDQYAEAESVDGILLDLGISSPQVDEAHRGFSFRREGPLDMRMNTDHGLTAAEWLEQASLEEITHVIKTYGEERFAFQIARAIVAKREDGLPPKTTTQLASLVSSVVRTREAGQDPATRTFQALRIFINRELEDLELGLKAAMKLLKPGARLAVISFHSLEDRIVKQFMQAHAKVDVPRGLPVREKDLPQSALKIISRLKPSDAEVSENPRARSAIMRVAEKRIGAAS.

Residues glycine 42–histidine 44, aspartate 62, phenylalanine 86, aspartate 104, and glutamine 111 contribute to the S-adenosyl-L-methionine site.

It belongs to the methyltransferase superfamily. RsmH family.

The protein localises to the cytoplasm. The enzyme catalyses cytidine(1402) in 16S rRNA + S-adenosyl-L-methionine = N(4)-methylcytidine(1402) in 16S rRNA + S-adenosyl-L-homocysteine + H(+). Specifically methylates the N4 position of cytidine in position 1402 (C1402) of 16S rRNA. The polypeptide is Ribosomal RNA small subunit methyltransferase H (Polynucleobacter necessarius subsp. necessarius (strain STIR1)).